Consider the following 1405-residue polypeptide: Xanthine dehydrogenase (1405 aa).

The 88-residue stretch at 17–104 folds into the 2Fe-2S ferredoxin-type domain; the sequence is NKLTFYVNGV…GKHLITVEGI (88 aa). The [2Fe-2S] cluster site is built by C56, C61, C64, C86, C125, C128, C161, and C163. The 187-residue stretch at 288 to 474 folds into the FAD-binding PCMH-type domain; sequence FGNEQKVWFR…TKIFVPETVP (187 aa). FAD-binding positions include 316 to 323, F397, 407 to 411, D420, I464, and K483; these read IVGGASEI and TPAGN. Positions 833 and 864 each coordinate Mo-molybdopterin. Substrate-binding residues include E868 and R946. R978 contacts Mo-molybdopterin. F980 contacts substrate. A Mo-molybdopterin-binding site is contributed by A1147. The active-site Proton acceptor is the E1333.

Belongs to the xanthine dehydrogenase family. As to quaternary structure, homodimer. Requires Mo-molybdopterin as cofactor. [2Fe-2S] cluster serves as cofactor. FAD is required as a cofactor.

Its subcellular location is the cytoplasm. The catalysed reaction is hypoxanthine + NAD(+) + H2O = xanthine + NADH + H(+). It carries out the reaction xanthine + NAD(+) + H2O = urate + NADH + H(+). It functions in the pathway purine metabolism. Completely inhibited by allopurinol and significantly inhibited by adenine. Inhibited by Fe(2+), Cd(2+) and Zn(2+) and strongly inhibited by Cu(2+). Mg(2+) and Mo(2+) have no effect on activity. Functionally, key enzyme in purine degradation. Catalyzes the oxidation of hypoxanthine to xanthine. Catalyzes the oxidation of xanthine to uric acid. Oxidizes xanthine, hypoxanthine and pterine at high rates. Can also act on purine and guanine. The sequence is that of Xanthine dehydrogenase from Blastobotrys adeninivorans (Yeast).